Consider the following 397-residue polypeptide: Pentatricopeptide repeat-containing protein At1g80150, mitochondrial (397 aa).

The transit peptide at 1–81 directs the protein to the mitochondrion; that stretch reads MLSLRHIRRF…FAFEDTVSRL (81 aa). PPR repeat units lie at residues 105–139, 140–170, 176–210, 211–245, 246–280, 281–315, 316–350, and 351–381; these read REGFIVRIIMLYGKAGMTKQALDTFFNMDLYGCKR, SVKSFNAALQVLSFNPDLHTIWEFLHDAPSK, DAVSFNIAIKSFCELGILDGAYMAMREMEKSGLTP, DVVTYTTLISALYKHERCVIGNGLWNLMVLKGCKP, NLTTFNVRIQFLVNRRRAWDANDLLLLMPKLQVEP, DSITYNMVIKGFFLARFPDMAERVYTAMHGKGYKP, NLKIYQTMIHYLCKAGNFDLAYTMCKDCMRKKWYP, and NLDTVEMLLKGLVKKGQLDQAKSIMELVHRR.

Belongs to the PPR family. P subfamily.

It localises to the mitochondrion. In Arabidopsis thaliana (Mouse-ear cress), this protein is Pentatricopeptide repeat-containing protein At1g80150, mitochondrial.